We begin with the raw amino-acid sequence, 268 residues long: Calpain small subunit 1 (268 aa).

Met-1 carries the N-acetylmethionine modification. Phosphoserine is present on Ser-6. The EF-hand 1; atypical domain maps to 96–130; it reads EEVRQFRKLFVQLAGDDMEVSATELMNILNKVVTR. Ca(2+) contacts are provided by Ala-109, Asp-112, Glu-114, Glu-119, Asp-137, Asp-152, Asp-154, Thr-156, Lys-158, and Glu-163. EF-hand domains lie at 139 to 172, 169 to 204, 205 to 233, and 234 to 268; these read FGID…NNIK, NNIK…AGFH, LNEH…ISCL, and VRLD…TMYS. N6-acetyllysine is present on Lys-179. Positions 182, 184, 186, 188, 193, and 225 each coordinate Ca(2+).

As to quaternary structure, homodimer or heterodimer of a large (catalytic) and a small (regulatory) subunit. In presence of calcium, the heterodimer dissociates.

The protein localises to the cytoplasm. It is found in the cell membrane. Functionally, regulatory subunit of the calcium-regulated non-lysosomal thiol-protease which catalyzes limited proteolysis of substrates involved in cytoskeletal remodeling and signal transduction. Essential for embryonic development. The sequence is that of Calpain small subunit 1 (Capns1) from Mus musculus (Mouse).